A 374-amino-acid polypeptide reads, in one-letter code: MAEPGEQLPEEVLALIFRHLPLPDRAAAARVCRAWAAAATCSAVWHDTSISCDCELEGMLPPYLSACLDHVQNLWLEFEPSRKSSRRAATDLLTALTGRTPGLRGLCLECRGEKPLFDAGRDVLDAVHALCGAASALRHLDLRRLPFSLDDALVLQVAHGCPELRSLFLDNRTLVGSVGPGSVLELLEACPCLRALGLHLASLSRTALEALAAPERAPFELLALRCACPEDARAPPLPDEAWAALSLRHPGLQVELELEPVLPAESVTRVLQPAVPVATLRLSLSGDTVGPVRFAARHYAATLRALEVRAAASAELDAALEELAARCARLREVHCFCVVRPSVLHAFRARCPRLRSYTLKVTREPHPWRPTLVA.

Residues Ala2–Thr48 enclose the F-box domain.

In terms of assembly, directly interacts with SKP1 and CUL1.

In terms of biological role, substrate-recognition component of the SCF (SKP1-CUL1-F-box protein)-type E3 ubiquitin ligase complex. The sequence is that of F-box/LRR-repeat protein 8 (FBXL8) from Bos taurus (Bovine).